Reading from the N-terminus, the 549-residue chain is RNA-induced transcriptional silencing complex protein tas3 (549 aa).

Disordered stretches follow at residues 89 to 111 (KNSP…VRAS), 126 to 184 (DGKE…SDSI), 202 to 225 (IRSS…SSKS), 298 to 361 (LDNF…HLEK), and 381 to 430 (AHFH…PLAS). Over residues 298-307 (LDNFNRPSQQ) the composition is skewed to polar residues. Basic and acidic residues-rich tracts occupy residues 328–361 (YDSY…HLEK) and 403–416 (SDRQ…ELPT). The span at 419–430 (LNASDSHNPLAS) shows a compositional bias: polar residues.

Ago1, chp1 and tas3 interact to form the core of the RNA-induced transcriptional silencing (RITS) complex. The RITS complex interacts with the RDRC complex via interaction between ago1 and hrr1. Clr4 has a role in mediating this interaction.

Its subcellular location is the nucleus. The protein resides in the cytoplasm. It is found in the cytoskeleton. It localises to the microtubule organizing center. The protein localises to the spindle pole body. Its function is as follows. Has a role in the RNA interference (RNAi) pathway which is important for heterochromatin formation and accurate chromosome segregation. A member of the RNA-induced transcriptional silencing (RITS) complex which is involved in the biosynthesis of dsRNA from primer siRNAs provided by the RNA-directed RNA polymerase (RDRC) complex. This is RNA-induced transcriptional silencing complex protein tas3 (tas3) from Schizosaccharomyces pombe (strain 972 / ATCC 24843) (Fission yeast).